A 704-amino-acid polypeptide reads, in one-letter code: Serotransferrin (704 aa).

The first 19 residues, 1-19, serve as a signal peptide directing secretion; sequence MRPAVRALLACAVLGLCLA. Transferrin-like domains lie at 25 to 351 and 364 to 689; these read VRWC…NLRE and VKWC…NLRQ. Cystine bridges form between C28–C66 and C38–C57. Residue R42 is modified to Dimethylated arginine. The Fe(3+) site is built by D81 and Y113. Intrachain disulfides connect C136-C217, C176-C192, C179-C200, C189-C202, and C250-C264. Residues T138, R142, A144, and G145 each coordinate hydrogencarbonate. Y211 is a Fe(3+) binding site. H272 lines the Fe(3+) pocket. 11 disulfide bridges follow: C362/C622, C367/C399, C377/C390, C424/C699, C441/C663, C473/C549, C497/C690, C507/C521, C518/C532, C589/C603, and C641/C646. Residues D414 and Y449 each contribute to the Fe(3+) site. The hydrogencarbonate site is built by T475, R479, A481, and G482. An N-linked (GlcNAc...) asparagine glycan is attached at N514. Y543 serves as a coordination point for Fe(3+). Position 611 (H611) interacts with Fe(3+). Position 691 is a phosphoserine (S691).

The protein belongs to the transferrin family. In terms of assembly, monomer. Part of a complex composed of SLC40A1/ferroportin, TF/transferrin and HEPH/hephaestin that transfers iron from cells to transferrin. As to expression, expressed by the liver and secreted in plasma.

It localises to the secreted. Functionally, transferrins are iron binding transport proteins which can bind two Fe(3+) ions in association with the binding of an anion, usually bicarbonate. It is responsible for the transport of iron from sites of absorption and heme degradation to those of storage and utilization. Serum transferrin may also have a further role in stimulating cell proliferation. In Bos taurus (Bovine), this protein is Serotransferrin (TF).